Here is a 460-residue protein sequence, read N- to C-terminus: Argininosuccinate lyase (460 aa).

This sequence belongs to the lyase 1 family. Argininosuccinate lyase subfamily.

It is found in the cytoplasm. It catalyses the reaction 2-(N(omega)-L-arginino)succinate = fumarate + L-arginine. The protein operates within amino-acid biosynthesis; L-arginine biosynthesis; L-arginine from L-ornithine and carbamoyl phosphate: step 3/3. This is Argininosuccinate lyase from Streptococcus sanguinis (strain SK36).